Here is a 221-residue protein sequence, read N- to C-terminus: Octanoyltransferase (221 aa).

Residues 40–218 enclose the BPL/LPL catalytic domain; the sequence is PNLEDVLILL…AFAEVFGLEL (179 aa). Residues 82 to 89, 149 to 151, and 162 to 164 contribute to the substrate site; these read RGGEVTYH, AIG, and GFA. Cysteine 180 acts as the Acyl-thioester intermediate in catalysis.

Belongs to the LipB family.

It is found in the cytoplasm. The catalysed reaction is octanoyl-[ACP] + L-lysyl-[protein] = N(6)-octanoyl-L-lysyl-[protein] + holo-[ACP] + H(+). Its pathway is protein modification; protein lipoylation via endogenous pathway; protein N(6)-(lipoyl)lysine from octanoyl-[acyl-carrier-protein]: step 1/2. Its function is as follows. Catalyzes the transfer of endogenously produced octanoic acid from octanoyl-acyl-carrier-protein onto the lipoyl domains of lipoate-dependent enzymes. Lipoyl-ACP can also act as a substrate although octanoyl-ACP is likely to be the physiological substrate. The sequence is that of Octanoyltransferase from Nostoc sp. (strain PCC 7120 / SAG 25.82 / UTEX 2576).